We begin with the raw amino-acid sequence, 474 residues long: tRNA-2-methylthio-N(6)-dimethylallyladenosine synthase (474 aa).

One can recognise an MTTase N-terminal domain in the interval 3 to 120; sequence KKLHIKTWGC…LPEMINSVRG (118 aa). [4Fe-4S] cluster contacts are provided by Cys-12, Cys-49, Cys-83, Cys-157, Cys-161, and Cys-164. In terms of domain architecture, Radical SAM core spans 143 to 375; it reads RAEGPTAFVS…QERINQQAMA (233 aa). A TRAM domain is found at 378–441; the sequence is RRMLGTTQRI…PNSLRGKVVR (64 aa).

It belongs to the methylthiotransferase family. MiaB subfamily. As to quaternary structure, monomer. [4Fe-4S] cluster serves as cofactor.

It is found in the cytoplasm. It carries out the reaction N(6)-dimethylallyladenosine(37) in tRNA + (sulfur carrier)-SH + AH2 + 2 S-adenosyl-L-methionine = 2-methylsulfanyl-N(6)-dimethylallyladenosine(37) in tRNA + (sulfur carrier)-H + 5'-deoxyadenosine + L-methionine + A + S-adenosyl-L-homocysteine + 2 H(+). Functionally, catalyzes the methylthiolation of N6-(dimethylallyl)adenosine (i(6)A), leading to the formation of 2-methylthio-N6-(dimethylallyl)adenosine (ms(2)i(6)A) at position 37 in tRNAs that read codons beginning with uridine. This is tRNA-2-methylthio-N(6)-dimethylallyladenosine synthase from Escherichia coli O81 (strain ED1a).